A 95-amino-acid chain; its full sequence is uncharacterized protein (95 aa).

This is an uncharacterized protein from Bacillus anthracis.